Reading from the N-terminus, the 473-residue chain is Photosystem II CP43 reaction center protein (473 aa).

A propeptide spanning residues 1-14 is cleaved from the precursor; the sequence is MKTLYSLRRYYPVE. Residue T15 is modified to N-acetylthreonine. A Phosphothreonine modification is found at T15. Transmembrane regions (helical) follow at residues 69–93, 134–155, 178–200, 255–275, and 291–312; these read LFEVAHFVPEKPMYEQGLILLPHLA, LIGPETLEESFPFFGYVWKDKN, KASFFGGVYDTWAPGGGDVREIT, KPFAWARRALVWSGEAYLSYS, and WFNNTAYPSEFYGPTGPEASQA. Residue E367 participates in [CaMn4O5] cluster binding. Residues 447–471 traverse the membrane as a helical segment; sequence RARAAAAGFEKGIDRDSEPVLSMTP.

The protein belongs to the PsbB/PsbC family. PsbC subfamily. In terms of assembly, PSII is composed of 1 copy each of membrane proteins PsbA, PsbB, PsbC, PsbD, PsbE, PsbF, PsbH, PsbI, PsbJ, PsbK, PsbL, PsbM, PsbT, PsbX, PsbY, PsbZ, Psb30/Ycf12, at least 3 peripheral proteins of the oxygen-evolving complex and a large number of cofactors. It forms dimeric complexes. Binds multiple chlorophylls and provides some of the ligands for the Ca-4Mn-5O cluster of the oxygen-evolving complex. It may also provide a ligand for a Cl- that is required for oxygen evolution. PSII binds additional chlorophylls, carotenoids and specific lipids. is required as a cofactor.

Its subcellular location is the plastid. The protein localises to the chloroplast thylakoid membrane. One of the components of the core complex of photosystem II (PSII). It binds chlorophyll and helps catalyze the primary light-induced photochemical processes of PSII. PSII is a light-driven water:plastoquinone oxidoreductase, using light energy to abstract electrons from H(2)O, generating O(2) and a proton gradient subsequently used for ATP formation. This Anthoceros angustus (Hornwort) protein is Photosystem II CP43 reaction center protein.